We begin with the raw amino-acid sequence, 274 residues long: Protein FAM210A (274 aa).

The span at 51-66 shows a compositional bias: polar residues; it reads KWLHSQPKQQDSSTKT. A disordered region spans residues 51 to 91; the sequence is KWLHSQPKQQDSSTKTPVHDLPSGSQHQSEESSPSAKSSIS. Over residues 81 to 91 the composition is skewed to low complexity; the sequence is ESSPSAKSSIS. The DUF1279 domain occupies 105 to 217; that stretch reads DQSIGLLKRF…GYLSTPPLVK (113 aa). Residues 124 to 144 traverse the membrane as a helical segment; sequence VLIPVHLVTSSFWFGSFYYAA. Residues 221–274 adopt a coiled-coil conformation; the sequence is QDRMEETKELFTEKMEETRDIISGKMEETKDRISEKLQETKDRVAFRKKKNEEM.

This sequence belongs to the FAM210 family.

It localises to the membrane. The protein localises to the mitochondrion. It is found in the cytoplasm. May play a role in the structure and strength of both muscle and bone. The chain is Protein FAM210A (fam210a) from Xenopus tropicalis (Western clawed frog).